A 299-amino-acid polypeptide reads, in one-letter code: Urease accessory protein UreD (299 aa).

This sequence belongs to the UreD family. As to quaternary structure, ureD, UreF and UreG form a complex that acts as a GTP-hydrolysis-dependent molecular chaperone, activating the urease apoprotein by helping to assemble the nickel containing metallocenter of UreC. The UreE protein probably delivers the nickel.

The protein resides in the cytoplasm. In terms of biological role, required for maturation of urease via the functional incorporation of the urease nickel metallocenter. In Prochlorococcus marinus (strain MIT 9303), this protein is Urease accessory protein UreD.